The primary structure comprises 495 residues: Cobyric acid synthase (495 aa).

A GATase cobBQ-type domain is found at 258 to 427 (GLRVAAVRLP…WHGLFDNDGF (170 aa)). The active-site Nucleophile is the C339. H419 is an active-site residue.

The protein belongs to the CobB/CobQ family. CobQ subfamily.

Its pathway is cofactor biosynthesis; adenosylcobalamin biosynthesis. Its function is as follows. Catalyzes amidations at positions B, D, E, and G on adenosylcobyrinic A,C-diamide. NH(2) groups are provided by glutamine, and one molecule of ATP is hydrogenolyzed for each amidation. This chain is Cobyric acid synthase, found in Mycobacterium sp. (strain KMS).